The primary structure comprises 217 residues: 3-oxoadipate CoA-transferase subunit B (217 aa).

Glu50 is an active-site residue.

This sequence belongs to the 3-oxoacid CoA-transferase subunit B family. Heterodimer.

It carries out the reaction 3-oxoadipate + succinyl-CoA = 3-oxoadipyl-CoA + succinate. The protein operates within aromatic compound metabolism; beta-ketoadipate pathway; acetyl-CoA and succinyl-CoA from 3-oxoadipate: step 1/2. In Acinetobacter baylyi (strain ATCC 33305 / BD413 / ADP1), this protein is 3-oxoadipate CoA-transferase subunit B (pcaJ).